The sequence spans 320 residues: MIKKIGVLTSGGDAPGMNAAIRGVVRAALTEGLEVMGIYDGYLGLYEDRMVQLDRYSVSDMINRGGTFLGSARFPEFRDENIRAVAIENLKKRGIDALVVIGGDGSYMGAKRLTEIGFPCIGLPGTIDNDIKGTDYTIGYFTALGTVVEAIDRLRDTSSSHQRISIVEVMGRYCGDLTLAAAIAGGCEFIVVPEVEFNREDLVAEIKAGIAKGKKHAIVAITEHMCDVDELAHFIEKETGRETRATVLGHIQRGGSPVPYDRILASRMGAYAIDLLLEGHGGRCVGIQNEQLVHHDIIDAIENMKRPFKSDWMECAKKLY.

Gly-12 lines the ATP pocket. ADP contacts are provided by residues 22–26 (RGVVR) and 55–60 (RYSVSD). Residues 73 to 74 (RF) and 103 to 106 (GDGS) contribute to the ATP site. Asp-104 is a binding site for Mg(2+). Position 126–128 (126–128 (TID)) interacts with substrate. Catalysis depends on Asp-128, which acts as the Proton acceptor. Arg-155 contacts ADP. Residues Arg-163 and 170–172 (MGR) contribute to the substrate site. Residues 186–188 (GCE), Lys-212, and 214–216 (KKH) each bind ADP. Substrate-binding positions include Glu-223, Arg-244, and 250 to 253 (HIQR).

It belongs to the phosphofructokinase type A (PFKA) family. ATP-dependent PFK group I subfamily. Prokaryotic clade 'B1' sub-subfamily. In terms of assembly, homotetramer. Mg(2+) serves as cofactor.

It localises to the cytoplasm. The catalysed reaction is beta-D-fructose 6-phosphate + ATP = beta-D-fructose 1,6-bisphosphate + ADP + H(+). It functions in the pathway carbohydrate degradation; glycolysis; D-glyceraldehyde 3-phosphate and glycerone phosphate from D-glucose: step 3/4. With respect to regulation, allosterically activated by ADP and other diphosphonucleosides, and allosterically inhibited by phosphoenolpyruvate. Functionally, catalyzes the phosphorylation of D-fructose 6-phosphate to fructose 1,6-bisphosphate by ATP, the first committing step of glycolysis. In Salmonella gallinarum (strain 287/91 / NCTC 13346), this protein is ATP-dependent 6-phosphofructokinase.